The sequence spans 130 residues: Small ribosomal subunit protein bS6 (130 aa).

Residues 100–130 form a disordered region; it reads SPMVKAKDERRERREDFAEAGDDVDAGDSEE. Positions 104–116 are enriched in basic and acidic residues; sequence KAKDERRERREDF. A compositionally biased stretch (acidic residues) spans 117–130; sequence AEAGDDVDAGDSEE.

It belongs to the bacterial ribosomal protein bS6 family.

Binds together with bS18 to 16S ribosomal RNA. This is Small ribosomal subunit protein bS6 from Pectobacterium carotovorum subsp. carotovorum (strain PC1).